The chain runs to 629 residues: MMETIKSEIKRTIEGIVREMAPDWSEDIQFVDTPSPELGDFGTPVAFQLARLLRKSPLIIAQEIAEKFNKNKPKEVKKAIAVNGYVNFFLDYPQISKLVIEAILGYGTEYGRSEIGKGKKVIVEHTSVNPTKPLHMGHARNAILGDTVARILRFLGYQVEVQNYIDDLGVQFAQVYWGYLNLKRKFDELMKELKEKIPKNNPIDHVLGLLYVEVNKKIEESSEVEKEIRELMKKLEERELNGRKLAEEVVKAQMETLYSLNIYYDLLVWESDIVSTRLFEKTIKLLEKNENFYTPKEGKYKGAFVMDLSKLFPDMKNPYLVLRRSDGTATYTGKDIAYHLWKFGKIDIDLMYKKWDEHTWTTAPDGEPIPGKFGAGDIVINVIGAEQRHPQLAIKYALELLGYKDAAENFHHLAYEHVESPEGKFSGRKGTWVGFTVDEVIAEAINKAKSLIEEKNPNLTEEEKEEIAKKVAVGAIRYTLIKYSPEKKIVFRWEDVLNFEGESAPYIQYAHARCSSILRKAEELGISTDWKSLLKVANFNQITEKERELIMLLSRFPEIVQQAGTDLKPHLIAWYANEVASTFNKFYMDHPVIKAEEGVREARLLLVMATRQVLRNSLWLMGIEAPDKM.

Positions 128–138 (VNPTKPLHMGH) match the 'HIGH' region motif.

The protein belongs to the class-I aminoacyl-tRNA synthetase family.

The protein localises to the cytoplasm. The enzyme catalyses tRNA(Arg) + L-arginine + ATP = L-arginyl-tRNA(Arg) + AMP + diphosphate. The protein is Arginine--tRNA ligase of Pyrococcus furiosus (strain ATCC 43587 / DSM 3638 / JCM 8422 / Vc1).